Here is a 446-residue protein sequence, read N- to C-terminus: MITIKRGLDLPIAGTPSQVINDGKTITKVALLGEEYVGMRPTMHVRVGDEVKKAQILFEDKKNPGVKFTSPASGKVIEVNRGAKRVLQSVVIEVAGDEQITFDSFEASQLASIDRQTVKTQLVESGLWTALRTRPFSKVPAIESSTQAIFVTAMDTNPLAAKPETIINEQSEAFVAGLDILSTLTEGKVYVCKSGTSLPRSSQPNVEEHVFDGPHPAGLVGTHMHFLYPVNAVNVAWSINYQDVIAFGQLFLTGELYTQRVVSLAGPVVNKPRLVRTQIGASLEELTDNELMPGEVRVISGSVLSGVKAAGPVAYLGRYHLQVSVLREGRDKDFLGWAMPGKNKFSVTRSFLGHLFTGQLFNMTTTTNGSDRAMVPIGNYEKVLPLDMEPTLLLRDLCAGDIDSAQRLGALELDEEDLALCTFVCPGKYEYGQLLRECLDKIEKEG.

This sequence belongs to the NqrA family. Composed of six subunits; NqrA, NqrB, NqrC, NqrD, NqrE and NqrF.

The catalysed reaction is a ubiquinone + n Na(+)(in) + NADH + H(+) = a ubiquinol + n Na(+)(out) + NAD(+). Its function is as follows. NQR complex catalyzes the reduction of ubiquinone-1 to ubiquinol by two successive reactions, coupled with the transport of Na(+) ions from the cytoplasm to the periplasm. NqrA to NqrE are probably involved in the second step, the conversion of ubisemiquinone to ubiquinol. This is Na(+)-translocating NADH-quinone reductase subunit A from Vibrio anguillarum (Listonella anguillarum).